Here is a 575-residue protein sequence, read N- to C-terminus: Glutathione hydrolase proenzyme (575 aa).

A signal peptide spans 1–24 (MKNQTFSKALLATALSCALFNVHA). Arg-100 is an L-glutamate binding site. Thr-376 functions as the Nucleophile in the catalytic mechanism. Residues Thr-394, Asn-396, Glu-415, Asp-418, 447 to 448 (SS), and 468 to 469 (GG) each bind L-glutamate.

This sequence belongs to the gamma-glutamyltransferase family. In terms of assembly, this enzyme consists of two polypeptide chains, which are synthesized in precursor form from a single polypeptide. Post-translationally, cleaved by autocatalysis into a large and a small subunit.

It is found in the periplasm. It catalyses the reaction an N-terminal (5-L-glutamyl)-[peptide] + an alpha-amino acid = 5-L-glutamyl amino acid + an N-terminal L-alpha-aminoacyl-[peptide]. The enzyme catalyses glutathione + H2O = L-cysteinylglycine + L-glutamate. It carries out the reaction an S-substituted glutathione + H2O = an S-substituted L-cysteinylglycine + L-glutamate. It functions in the pathway sulfur metabolism; glutathione metabolism. The protein is Glutathione hydrolase proenzyme (ggt) of Pseudomonas sp. (strain A14).